Here is a 153-residue protein sequence, read N- to C-terminus: CASP-like protein 5B1 (153 aa).

Topologically, residues 1 to 20 (MRELAGSPGTWSGLSLRVGQ) are cytoplasmic. Residues 21 to 41 (LVFAAASVCATASALGFAAYT) traverse the membrane as a helical segment. Position 42 (Ala42) is a topological domain, extracellular. The chain crosses the membrane as a helical span at residues 43–63 (FCYLIASMGLQALWSLGLACL). Over 64 to 76 (DCYALKFKKDLHS) the chain is Cytoplasmic. A helical transmembrane segment spans residues 77 to 97 (AVLLSLFVVGDWVTAILSFAA). The Extracellular segment spans residues 98–128 (SCSAAGVVVLFDRDIYACRNPQLPCGRFELA). A helical membrane pass occupies residues 129 to 149 (IACAFLSWAFSATSALVMFWL). The Cytoplasmic segment spans residues 150-153 (LASL).

It belongs to the Casparian strip membrane proteins (CASP) family. In terms of assembly, homodimer and heterodimers.

It is found in the cell membrane. The chain is CASP-like protein 5B1 from Oryza sativa subsp. indica (Rice).